A 435-amino-acid polypeptide reads, in one-letter code: tRNA modification GTPase MnmE (435 aa).

R20, E77, and K117 together coordinate (6S)-5-formyl-5,6,7,8-tetrahydrofolate. A TrmE-type G domain is found at G214–L359. Residues N224–S229, T243–T249, and D268–G271 contribute to the GTP site. Residues S228 and T249 each coordinate Mg(2+). (6S)-5-formyl-5,6,7,8-tetrahydrofolate is bound at residue K435.

Belongs to the TRAFAC class TrmE-Era-EngA-EngB-Septin-like GTPase superfamily. TrmE GTPase family. As to quaternary structure, homodimer. Heterotetramer of two MnmE and two MnmG subunits. Requires K(+) as cofactor.

The protein localises to the cytoplasm. In terms of biological role, exhibits a very high intrinsic GTPase hydrolysis rate. Involved in the addition of a carboxymethylaminomethyl (cmnm) group at the wobble position (U34) of certain tRNAs, forming tRNA-cmnm(5)s(2)U34. The protein is tRNA modification GTPase MnmE of Bartonella bacilliformis (strain ATCC 35685 / KC583 / Herrer 020/F12,63).